A 151-amino-acid polypeptide reads, in one-letter code: Transcriptional regulator MraZ (151 aa).

2 consecutive SpoVT-AbrB domains span residues 5–51 (AHEL…PVAE) and 81–124 (AEIL…GREQ).

This sequence belongs to the MraZ family. Forms oligomers.

It is found in the cytoplasm. The protein localises to the nucleoid. This chain is Transcriptional regulator MraZ, found in Neisseria meningitidis serogroup C / serotype 2a (strain ATCC 700532 / DSM 15464 / FAM18).